Here is a 316-residue protein sequence, read N- to C-terminus: Pantothenate kinase (316 aa).

95 to 102 (GSVAVGKS) provides a ligand contact to ATP.

The protein belongs to the prokaryotic pantothenate kinase family.

The protein localises to the cytoplasm. It catalyses the reaction (R)-pantothenate + ATP = (R)-4'-phosphopantothenate + ADP + H(+). It functions in the pathway cofactor biosynthesis; coenzyme A biosynthesis; CoA from (R)-pantothenate: step 1/5. The sequence is that of Pantothenate kinase from Klebsiella pneumoniae (strain 342).